We begin with the raw amino-acid sequence, 527 residues long: Serine/threonine-protein kinase NLK (527 aa).

2 sufficient for interaction with DAPK3 regions span residues 1–125 and 124–416; these read MSLC…KAHH and HHHQ…SKRI. 2 required for interaction with TAB2 regions span residues 1 to 304 and 434 to 527; these read MSLC…VVTQ and YHTC…LVWE. Disordered stretches follow at residues 22–72 and 90–140; these read AAAA…SSAA and QQPY…DIEP. The segment covering 26–54 has biased composition (basic residues); sequence GHHHHHHHHLPHLPPPHLHHHHHPQHHLH. A compositionally biased stretch (low complexity) spans 103–119; it reads PGPAAAAPAQVQAAAAA. Positions 122–131 are enriched in basic residues; sequence KAHHHQHSHH. Residues 138–427 enclose the Protein kinase domain; that stretch reads IEPDRPIGYG…AKDALAHPYL (290 aa). ATP contacts are provided by residues 144–152 and K167; that span reads IGYGAFGVV. The Proton acceptor role is filled by D264. Phosphothreonine; by autocatalysis is present on T298. Residues 298–300 carry the TQE motif; sequence TQE. The tract at residues 428-527 is required for homodimerization and kinase activation and localization to the nucleus; that stretch reads DEGRLRYHTC…EMPPSPLVWE (100 aa). S522 carries the phosphoserine modification.

Belongs to the protein kinase superfamily. CMGC Ser/Thr protein kinase family. MAP kinase subfamily. Homodimer. Homodimerization is required for intermolecular autophosphorylation, kinase activation and nuclear localization. May interact with components of cullin-RING-based SCF (SKP1-CUL1-F-box protein) E3 ubiquitin-protein ligase complexes. Interacts with LEF1, MEF2A, MYBL1 and MYBL2. Interacts with the upstream activating kinases HIPK2 and MAP3K7/TAK1. Interaction with MAP3K7/TAK1 seems to be indirect, and may be mediated by other proteins such as STAT3, TAB1 and TAB2. Interacts with and phosphorylates a number of transcription factors including FOXO1, FOXO3, FOXO4, MYB, NOTCH1 and TCF7L2/TCF4. Interacts with DAPK3/ZIPK, and this interaction may disrupt interaction with transcription factors such as TCF7L2/TCF4. Forms a transcriptional repressor complex with CHD7, PPARG and SETDB1. Interacts with RNF138/NARF. Interacts with ATF5; the interaction stabilizes ATF5 at the protein level in a kinase-independent manner. Mg(2+) serves as cofactor. Post-translationally, phosphorylated on Thr-298. Intermolecular autophosphorylation on Thr-298 activates the enzyme.

It is found in the nucleus. It localises to the cytoplasm. The catalysed reaction is L-seryl-[protein] + ATP = O-phospho-L-seryl-[protein] + ADP + H(+). It carries out the reaction L-threonyl-[protein] + ATP = O-phospho-L-threonyl-[protein] + ADP + H(+). Activated by the non-canonical Wnt signaling pathway, in which WNT5A leads to activation of MAP3K7/TAK1 and HIPK2, which subsequently phosphorylates and activates this protein. Activated by dimerization and subsequent intermolecular autophosphorylation on Thr-298. Other cytokines such as IL6 may also activate this regulatory circuit. Its function is as follows. Serine/threonine-protein kinase that regulates a number of transcription factors with key roles in cell fate determination. Positive effector of the non-canonical Wnt signaling pathway, acting downstream of WNT5A, MAP3K7/TAK1 and HIPK2. Negative regulator of the canonical Wnt/beta-catenin signaling pathway. Binds to and phosphorylates TCF7L2/TCF4 and LEF1, promoting the dissociation of the TCF7L2/LEF1/beta-catenin complex from DNA, as well as the ubiquitination and subsequent proteolysis of LEF1. Together these effects inhibit the transcriptional activation of canonical Wnt/beta-catenin target genes. Negative regulator of the Notch signaling pathway. Binds to and phosphorylates NOTCH1, thereby preventing the formation of a transcriptionally active ternary complex of NOTCH1, RBPJ/RBPSUH and MAML1. Negative regulator of the MYB family of transcription factors. Phosphorylation of MYB leads to its subsequent proteolysis while phosphorylation of MYBL1 and MYBL2 inhibits their interaction with the coactivator CREBBP. Other transcription factors may also be inhibited by direct phosphorylation of CREBBP itself. Acts downstream of IL6 and MAP3K7/TAK1 to phosphorylate STAT3, which is in turn required for activation of NLK by MAP3K7/TAK1. Upon IL1B stimulus, cooperates with ATF5 to activate the transactivation activity of C/EBP subfamily members. Phosphorylates ATF5 but also stabilizes ATF5 protein levels in a kinase-independent manner. Acts as an inhibitor of the mTORC1 complex in response to osmotic stress by mediating phosphorylation of RPTOR, thereby preventing recruitment of the mTORC1 complex to lysosomes. This chain is Serine/threonine-protein kinase NLK (NLK), found in Canis lupus familiaris (Dog).